The primary structure comprises 479 residues: Ribosomal RNA small subunit methyltransferase F (479 aa).

S-adenosyl-L-methionine is bound by residues 125–131, Glu149, Asp176, and Asp194; that span reads AAAPGSK. The Nucleophile role is filled by Cys247.

Belongs to the class I-like SAM-binding methyltransferase superfamily. RsmB/NOP family.

It is found in the cytoplasm. The enzyme catalyses cytidine(1407) in 16S rRNA + S-adenosyl-L-methionine = 5-methylcytidine(1407) in 16S rRNA + S-adenosyl-L-homocysteine + H(+). Specifically methylates the cytosine at position 1407 (m5C1407) of 16S rRNA. The sequence is that of Ribosomal RNA small subunit methyltransferase F from Escherichia coli O157:H7 (strain EC4115 / EHEC).